The chain runs to 455 residues: Argininosuccinate lyase (455 aa).

The protein belongs to the lyase 1 family. Argininosuccinate lyase subfamily.

Its subcellular location is the cytoplasm. It catalyses the reaction 2-(N(omega)-L-arginino)succinate = fumarate + L-arginine. It functions in the pathway amino-acid biosynthesis; L-arginine biosynthesis; L-arginine from L-ornithine and carbamoyl phosphate: step 3/3. In Shewanella halifaxensis (strain HAW-EB4), this protein is Argininosuccinate lyase.